The primary structure comprises 311 residues: Dof zinc finger protein DOF1.4 (311 aa).

The span at 1–12 (MQSKNMIVASSH) shows a compositional bias: polar residues. Residues 1–29 (MQSKNMIVASSHQQQQQQQPQQPQPQLKC) form a disordered region. Residues 13–26 (QQQQQQQPQQPQPQ) are compositionally biased toward low complexity. The Dof-type zinc finger occupies 27–81 (LKCPRCDSSNTKFCYYNNYSLSQPRHFCKACKRYWTRGGTLRNVPVGGSYRKNKR). Residues cysteine 29, cysteine 32, cysteine 54, and cysteine 57 each contribute to the Zn(2+) site. The tract at residues 72–110 (VGGSYRKNKRVKRPSTATTTTASTVSTTNSSSPNNPHQI) is disordered. Residues 85–107 (PSTATTTTASTVSTTNSSSPNNP) are compositionally biased toward low complexity.

The protein resides in the nucleus. In terms of biological role, transcription factor that binds specifically to a 5'-AA[AG]G-3' consensus core sequence. The polypeptide is Dof zinc finger protein DOF1.4 (DOF1.4) (Arabidopsis thaliana (Mouse-ear cress)).